The chain runs to 286 residues: Probable xyloglucan endotransglucosylase/hydrolase protein 23 (286 aa).

The N-terminal stretch at 1-24 is a signal peptide; the sequence is MAMISYSTIVVALLASFMICSVSA. The GH16 domain maps to 25 to 214; it reads NFQRDVEITW…WSKAPFTASY (190 aa). Residue Glu-100 is the Nucleophile of the active site. Glu-104 acts as the Proton donor in catalysis. A xyloglucan-binding site is contributed by Glu-104. Asn-108 is a glycosylation site (N-linked (GlcNAc...) asparagine). Xyloglucan is bound by residues 117–119, 127–129, 193–194, and Gly-198; these read HTN, DRE, and EW. Cysteines 222 and 231 form a disulfide. An N-linked (GlcNAc...) asparagine glycan is attached at Asn-233. Cys-269 and Cys-283 are joined by a disulfide. Position 274 (Arg-274) interacts with xyloglucan.

Belongs to the glycosyl hydrolase 16 family. XTH group 2 subfamily. Contains at least one intrachain disulfide bond essential for its enzymatic activity.

It is found in the secreted. The protein resides in the cell wall. The protein localises to the extracellular space. It localises to the apoplast. The catalysed reaction is breaks a beta-(1-&gt;4) bond in the backbone of a xyloglucan and transfers the xyloglucanyl segment on to O-4 of the non-reducing terminal glucose residue of an acceptor, which can be a xyloglucan or an oligosaccharide of xyloglucan.. Its function is as follows. Catalyzes xyloglucan endohydrolysis (XEH) and/or endotransglycosylation (XET). Cleaves and religates xyloglucan polymers, an essential constituent of the primary cell wall, and thereby participates in cell wall construction of growing tissues. This is Probable xyloglucan endotransglucosylase/hydrolase protein 23 (XTH23) from Arabidopsis thaliana (Mouse-ear cress).